A 168-amino-acid polypeptide reads, in one-letter code: Ribosome maturation factor RimM (168 aa).

Residues 97-168 (PNEYYYYELL…RLVVKVPEWI (72 aa)) enclose the PRC barrel domain.

The protein belongs to the RimM family. As to quaternary structure, binds ribosomal protein uS19.

The protein localises to the cytoplasm. In terms of biological role, an accessory protein needed during the final step in the assembly of 30S ribosomal subunit, possibly for assembly of the head region. Essential for efficient processing of 16S rRNA. May be needed both before and after RbfA during the maturation of 16S rRNA. It has affinity for free ribosomal 30S subunits but not for 70S ribosomes. The sequence is that of Ribosome maturation factor RimM from Pseudothermotoga lettingae (strain ATCC BAA-301 / DSM 14385 / NBRC 107922 / TMO) (Thermotoga lettingae).